Consider the following 542-residue polypeptide: Hydroxylamine reductase (542 aa).

[4Fe-4S] cluster is bound by residues Cys3, Cys6, Cys15, and Cys21. The hybrid [4Fe-2O-2S] cluster site is built by His243, Glu267, Cys311, Cys398, Cys426, Cys451, Glu485, and Lys487. A Cysteine persulfide modification is found at Cys398.

This sequence belongs to the HCP family. Requires [4Fe-4S] cluster as cofactor. The cofactor is hybrid [4Fe-2O-2S] cluster.

Its subcellular location is the cytoplasm. The catalysed reaction is A + NH4(+) + H2O = hydroxylamine + AH2 + H(+). Catalyzes the reduction of hydroxylamine to form NH(3) and H(2)O. The protein is Hydroxylamine reductase of Syntrophobacter fumaroxidans (strain DSM 10017 / MPOB).